The following is a 308-amino-acid chain: Adipolin (308 aa).

Positions 1–21 are cleaved as a signal peptide; sequence MWAWGWAAAALLWLQTAGAGA. The tract at residues 36 to 119 is disordered; the sequence is DSPNITTSNR…PPGSPGVGVT (84 aa). Residue asparagine 39 is glycosylated (N-linked (GlcNAc...) asparagine). The segment covering 82 to 93 has biased composition (basic residues); it reads RKRCRGRDKKSR. Pro residues predominate over residues 99-113; it reads PGPPGPPGPPGPPGS. The C1q domain occupies 153–308; that stretch reads QRLVVEAFYC…SSFSGMLLGT (156 aa).

It belongs to the adipolin/erythroferrone family. In terms of assembly, homomultimer; disulfide-linked. Adipolin fC1QTNF12: homotrimer; disulfide-linked. Adipolin gC1QTNF12: homodimer; disulfide-linked. May interact with ERFE. In terms of processing, processed into Adipolin fC1QTNF12 and Adipolin gC1QTNF12 by FURIN. Insulin enhances endogenous C1QTNF12 cleavage. Widely expressed, with high expression in subcutaneous and epididymal white adipose tissues and brown adipose tissue. Expressed in adipocytes (at protein level).

It localises to the secreted. Functionally, insulin-sensitizing adipocyte-secreted protein (adipokine) that regulates glucose metabolism in liver and adipose tissue. Promotes glucose uptake in adipocytes and suppresses de novo glucose production in hepatocytes via the PI3K-Akt signaling pathway. Administration lead to reduction of blood glucose. Able to attenuate inflammation in fat tissue. Its function is as follows. Acts by activating the Akt signaling in hepatocytes and adipocytes. Not able to increase insulin-stimulated glucose uptake in adipocytes. Acts by activating the MAP kinase. Increases insulin-stimulated glucose uptake in adipocytes. The sequence is that of Adipolin (C1qtnf12) from Mus musculus (Mouse).